The following is a 557-amino-acid chain: Formate--tetrahydrofolate ligase (557 aa).

65 to 72 (TPAGEGKT) serves as a coordination point for ATP.

This sequence belongs to the formate--tetrahydrofolate ligase family.

The catalysed reaction is (6S)-5,6,7,8-tetrahydrofolate + formate + ATP = (6R)-10-formyltetrahydrofolate + ADP + phosphate. The protein operates within one-carbon metabolism; tetrahydrofolate interconversion. This Methylorubrum extorquens (strain CM4 / NCIMB 13688) (Methylobacterium extorquens) protein is Formate--tetrahydrofolate ligase.